The following is a 165-amino-acid chain: Phosphopantetheine adenylyltransferase (165 aa).

S10 provides a ligand contact to substrate. Residues 10–11 and H18 contribute to the ATP site; that span reads SF. Substrate is bound by residues K42, T79, and R93. Residues 94–96, E104, and 129–135 each bind ATP; these read GLR and VRPITAT.

It belongs to the bacterial CoaD family. In terms of assembly, homohexamer. It depends on Mg(2+) as a cofactor.

The protein localises to the cytoplasm. It carries out the reaction (R)-4'-phosphopantetheine + ATP + H(+) = 3'-dephospho-CoA + diphosphate. Its pathway is cofactor biosynthesis; coenzyme A biosynthesis; CoA from (R)-pantothenate: step 4/5. Reversibly transfers an adenylyl group from ATP to 4'-phosphopantetheine, yielding dephospho-CoA (dPCoA) and pyrophosphate. The sequence is that of Phosphopantetheine adenylyltransferase from Nitrobacter hamburgensis (strain DSM 10229 / NCIMB 13809 / X14).